Here is a 273-residue protein sequence, read N- to C-terminus: Dormancy associated translation inhibitor (273 aa).

As to quaternary structure, interacts with human TLR2.

Involved in translation regulation. Can also stimulate macrophages and peripheral blood mononuclear cells (PBMC) to secrete important cytokines that may be significant in granuloma formation and its maintenance. Increases secretion of IFN-gamma, TNF-alpha, IL-1 beta and IL-8 through human Toll-like receptor 2 (TLR2) signaling pathway. This is Dormancy associated translation inhibitor from Mycobacterium tuberculosis (strain CDC 1551 / Oshkosh).